The primary structure comprises 336 residues: C4-dicarboxylate-binding periplasmic protein DctP (336 aa).

An N-terminal signal peptide occupies residues Met1–Ala31. (S)-malate-binding residues include Lys48, Lys101, Arg176, Asn216, Asn220, and Tyr243. Positions 48, 101, 176, 216, 220, and 243 each coordinate succinate.

It belongs to the bacterial solute-binding protein 7 family. The complex comprises the extracytoplasmic solute receptor protein DctP, and the two transmembrane proteins DctQ and DctM.

It localises to the periplasm. In terms of biological role, part of the tripartite ATP-independent periplasmic (TRAP) transport system DctPQM involved in C4-dicarboxylates uptake. Required for the utilization of succinate, fumarate, L-malate and alpha-ketoglutarate. Binds succinate and malate. This chain is C4-dicarboxylate-binding periplasmic protein DctP, found in Shewanella loihica (strain ATCC BAA-1088 / PV-4).